The primary structure comprises 432 residues: D-amino acid dehydrogenase (432 aa).

FAD is bound at residue 3-17 (VLVLGSGVIGTTTAY).

This sequence belongs to the DadA oxidoreductase family. FAD is required as a cofactor.

The enzyme catalyses a D-alpha-amino acid + A + H2O = a 2-oxocarboxylate + AH2 + NH4(+). Its pathway is amino-acid degradation; D-alanine degradation; NH(3) and pyruvate from D-alanine: step 1/1. Its function is as follows. Oxidative deamination of D-amino acids. The protein is D-amino acid dehydrogenase of Azotobacter vinelandii (strain DJ / ATCC BAA-1303).